Reading from the N-terminus, the 359-residue chain is 3-dehydroquinate synthase (359 aa).

NAD(+) contacts are provided by residues 71–76 (DGEAYK), 105–109 (GVVGD), 129–130 (TT), Lys-142, and Lys-151. Glu-184, His-247, and His-264 together coordinate Zn(2+).

Belongs to the sugar phosphate cyclases superfamily. Dehydroquinate synthase family. Requires Co(2+) as cofactor. The cofactor is Zn(2+). NAD(+) serves as cofactor.

The protein resides in the cytoplasm. The enzyme catalyses 7-phospho-2-dehydro-3-deoxy-D-arabino-heptonate = 3-dehydroquinate + phosphate. It participates in metabolic intermediate biosynthesis; chorismate biosynthesis; chorismate from D-erythrose 4-phosphate and phosphoenolpyruvate: step 2/7. In terms of biological role, catalyzes the conversion of 3-deoxy-D-arabino-heptulosonate 7-phosphate (DAHP) to dehydroquinate (DHQ). The sequence is that of 3-dehydroquinate synthase from Burkholderia orbicola (strain MC0-3).